A 165-amino-acid polypeptide reads, in one-letter code: Photosystem I assembly protein Ycf3 (165 aa).

TPR repeat units lie at residues 32 to 65 (AFTY…EIDP), 69 to 102 (SYIL…NPFL), and 117 to 150 (GEQA…TPGN).

Belongs to the Ycf3 family.

The protein localises to the plastid. It localises to the chloroplast thylakoid membrane. Functionally, essential for the assembly of the photosystem I (PSI) complex. May act as a chaperone-like factor to guide the assembly of the PSI subunits. This Spinacia oleracea (Spinach) protein is Photosystem I assembly protein Ycf3.